A 576-amino-acid chain; its full sequence is Apolipoprotein N-acyltransferase 1 (576 aa).

7 consecutive transmembrane segments (helical) span residues 15-35, 38-58, 60-80, 92-112, 128-148, 168-188, and 204-224; these read LILCFGIGIGTVFGLSPFSFF, GVFASISCIFLFFSLNRTSIW, AFLWLLILSQILNFTAFYWIP, FVSILFFFLYGLISHLKFFLF, YILLIFPAAGTLSDMITFQIF, ICGVYGLSFLLLFISSTFLIL, and IASLICITFIYGFGLYRIGYI. In terms of domain architecture, CN hydrolase spans 236–538; sequence LSVLMIQPDT…TGTRAFSIRL (303 aa). The active-site Proton acceptor is glutamate 285. The active site involves lysine 355. Cysteine 446 acts as the Nucleophile in catalysis. The chain crosses the membrane as a helical span at residues 549 to 569; sequence FGNSFLWIFCILILISRLIFV.

The protein belongs to the CN hydrolase family. Apolipoprotein N-acyltransferase subfamily.

It is found in the cell inner membrane. The enzyme catalyses N-terminal S-1,2-diacyl-sn-glyceryl-L-cysteinyl-[lipoprotein] + a glycerophospholipid = N-acyl-S-1,2-diacyl-sn-glyceryl-L-cysteinyl-[lipoprotein] + a 2-acyl-sn-glycero-3-phospholipid + H(+). It participates in protein modification; lipoprotein biosynthesis (N-acyl transfer). Catalyzes the phospholipid dependent N-acylation of the N-terminal cysteine of apolipoprotein, the last step in lipoprotein maturation. This Leptospira interrogans serogroup Icterohaemorrhagiae serovar Lai (strain 56601) protein is Apolipoprotein N-acyltransferase 1.